A 162-amino-acid chain; its full sequence is Ribosomal RNA large subunit methyltransferase H (162 aa).

S-adenosyl-L-methionine-binding positions include Leu-78, Gly-109, and Leu-128–Leu-133.

Belongs to the RNA methyltransferase RlmH family. In terms of assembly, homodimer.

It localises to the cytoplasm. The catalysed reaction is pseudouridine(1915) in 23S rRNA + S-adenosyl-L-methionine = N(3)-methylpseudouridine(1915) in 23S rRNA + S-adenosyl-L-homocysteine + H(+). Its function is as follows. Specifically methylates the pseudouridine at position 1915 (m3Psi1915) in 23S rRNA. The polypeptide is Ribosomal RNA large subunit methyltransferase H (Psychrobacter sp. (strain PRwf-1)).